The sequence spans 146 residues: Hemoglobin subunit beta-S/F (146 aa).

The residue at position 1 (Val1) is an N-acetylvaline. The region spanning 2 to 146 (HLTDGEKNAI…VANALSHKYH (145 aa)) is the Globin domain. The residue at position 44 (Ser44) is a Phosphoserine. The residue at position 59 (Lys59) is an N6-acetyllysine. Residue His63 participates in heme b binding. Lys82 is modified (N6-acetyllysine). Residue His92 coordinates heme b. An S-nitrosocysteine modification is found at Cys93. N6-acetyllysine is present on Lys144.

It belongs to the globin family. In terms of assembly, heterotetramer of two alpha chains and two beta chains. As to expression, red blood cells.

Involved in oxygen transport from the lung to the various peripheral tissues. This Urocitellus townsendii (Townsend's ground squirrel) protein is Hemoglobin subunit beta-S/F.